Here is a 209-residue protein sequence, read N- to C-terminus: tRNA (guanine-N(7)-)-methyltransferase (209 aa).

Residues Asp-35, Glu-60, Asn-87, and Asp-113 each coordinate S-adenosyl-L-methionine. Residue Asp-113 is part of the active site. Substrate is bound by residues Lys-117 and Asp-149.

The protein belongs to the class I-like SAM-binding methyltransferase superfamily. TrmB family.

It catalyses the reaction guanosine(46) in tRNA + S-adenosyl-L-methionine = N(7)-methylguanosine(46) in tRNA + S-adenosyl-L-homocysteine. It functions in the pathway tRNA modification; N(7)-methylguanine-tRNA biosynthesis. Its function is as follows. Catalyzes the formation of N(7)-methylguanine at position 46 (m7G46) in tRNA. This is tRNA (guanine-N(7)-)-methyltransferase from Prochlorococcus marinus (strain MIT 9515).